The primary structure comprises 239 residues: MICOS complex subunit mic25a (239 aa).

Gly2 carries the N-myristoyl glycine lipid modification. Disordered stretches follow at residues 27–88 and 113–133; these read VKLS…KKRY and DISRAVQRERAQTRQESERAK. Residues 50–78 are compositionally biased toward polar residues; sequence NKENQGHQTRTPSTSDAQAPKTQAKTTFP. The segment covering 79–88 has biased composition (basic and acidic residues); sequence DSKEELKKRY. Residues 79–166 are a coiled coil; the sequence is DSKEELKKRY…ITQLEKKNEE (88 aa). The 43-residue stretch at 192 to 234 folds into the CHCH domain; that stretch reads EPVCLNLQAQILNCYRENREQTLQCSDLAKEYMQCINAAKKNL. 2 short sequence motifs (cx9C motif) span residues 195–205 and 216–226; these read CLNLQAQILNC and CSDLAKEYMQC. Disulfide bonds link Cys195–Cys226 and Cys205–Cys216.

The protein belongs to the MICOS complex subunit Mic19 family. Metazoan Mic25 subfamily. As to quaternary structure, component of the mitochondrial contact site and cristae organizing system (MICOS) complex (also known as MINOS or MitOS complex).

Its subcellular location is the mitochondrion inner membrane. In terms of biological role, component of the MICOS complex, a large protein complex of the mitochondrial inner membrane that plays crucial roles in the maintenance of crista junctions, inner membrane architecture, and formation of contact sites to the outer membrane. In Danio rerio (Zebrafish), this protein is MICOS complex subunit mic25a (chchd6a).